Reading from the N-terminus, the 442-residue chain is tRNA-2-methylthio-N(6)-dimethylallyladenosine synthase (442 aa).

In terms of domain architecture, MTTase N-terminal spans 2-120 (KKVFIRTFGC…LPKMIVDKET (119 aa)). Positions 11, 49, 83, 157, 161, and 164 each coordinate [4Fe-4S] cluster. Residues 143–375 (RVEGGAAFVS…NEVIEAETAR (233 aa)) enclose the Radical SAM core domain. The TRAM domain occupies 378-441 (QTMVGTVQRC…TFSLRGKVVE (64 aa)).

It belongs to the methylthiotransferase family. MiaB subfamily. Monomer. [4Fe-4S] cluster serves as cofactor.

It localises to the cytoplasm. It carries out the reaction N(6)-dimethylallyladenosine(37) in tRNA + (sulfur carrier)-SH + AH2 + 2 S-adenosyl-L-methionine = 2-methylsulfanyl-N(6)-dimethylallyladenosine(37) in tRNA + (sulfur carrier)-H + 5'-deoxyadenosine + L-methionine + A + S-adenosyl-L-homocysteine + 2 H(+). In terms of biological role, catalyzes the methylthiolation of N6-(dimethylallyl)adenosine (i(6)A), leading to the formation of 2-methylthio-N6-(dimethylallyl)adenosine (ms(2)i(6)A) at position 37 in tRNAs that read codons beginning with uridine. The polypeptide is tRNA-2-methylthio-N(6)-dimethylallyladenosine synthase (Neisseria meningitidis serogroup B (strain ATCC BAA-335 / MC58)).